The chain runs to 439 residues: ATP-dependent RNA helicase RhlB (439 aa).

The Q motif signature appears at 9–37 (QKFADLPLHPEVKQALAENGFEFCTPIQA). Residues 40-219 (LPVLLQSKDI…YDHMNDPVKV (180 aa)) enclose the Helicase ATP-binding domain. Residue 53-60 (AQTGTGKT) coordinates ATP. The short motif at 165 to 168 (DEAD) is the DEAD box element. The Helicase C-terminal domain occupies 243 to 390 (KMRLLLTLIE…VSNYDSSALL (148 aa)). Residues 398–439 (KIPRKHPAGTRNLRERAGAGRPQGAHRSGGRPPRHDRTRRHS) are disordered. Over residues 425 to 439 (SGGRPPRHDRTRRHS) the composition is skewed to basic residues.

This sequence belongs to the DEAD box helicase family. RhlB subfamily. Component of the RNA degradosome, which is a multiprotein complex involved in RNA processing and mRNA degradation.

Its subcellular location is the cytoplasm. The enzyme catalyses ATP + H2O = ADP + phosphate + H(+). Its function is as follows. DEAD-box RNA helicase involved in RNA degradation. Has RNA-dependent ATPase activity and unwinds double-stranded RNA. The chain is ATP-dependent RNA helicase RhlB from Shewanella putrefaciens (strain CN-32 / ATCC BAA-453).